The chain runs to 347 residues: MKELVEEMPDEGYGCTVANRFGQLLGDESDPFDILYAAGTEKKQKKKKEEPKKTSTTTKSVKKESQRDRKTILPAGGGGQVRPGHEVVEEPIQRRVTFDRKFNDAEKPPLSFSVERPVDVLDRPARGRGTGRGKGARGPGFPRSNDGFDQRGKREFERHSGSDRSSVRSEEKRSGSGSRNWGSVRDHMSVIEVASPSEEVTENEETQEAVETDGENRPSETEEVIEVAMEMTLDEWKALQEQSRPKVELNIRKTESSVPSKAVVIHKSKLLQKQDGMDEDVVFRRPANDITCQLEFNFGSLDRPTRGGRGGRGGRGRGGPSMPTLRSPQKFDSAPNPDDPEDFPALA.

2 disordered regions span residues 39 to 221 and 298 to 347; these read GTEK…PSET and FGSL…PALA. Basic and acidic residues-rich tracts occupy residues 61–71, 83–107, 116–125, and 146–174; these read VKKESQRDRKT, PGHEVVEEPIQRRVTFDRKFNDAEK, RPVDVLDRPA, and DGFDQRGKREFERHSGSDRSSVRSEEKRS. Positions 199 to 213 are enriched in acidic residues; sequence EVTENEETQEAVETD. Over residues 307-319 the composition is skewed to gly residues; that stretch reads GGRGGRGGRGRGG. The span at 338–347 shows a compositional bias: acidic residues; sequence DDPEDFPALA.

The protein belongs to the SERBP1-HABP4 family. As to quaternary structure, associates with ribosomes; promoting ribosome stabilization. Interacts with eef2/eEF2; promoting ribosome stabilization.

It localises to the nucleus. The protein resides in the cytoplasm. The protein localises to the stress granule. It is found in the nucleolus. Its subcellular location is the nucleus speckle. It localises to the cajal body. In terms of biological role, ribosome-binding protein that promotes ribosome hibernation, a process during which ribosomes are stabilized in an inactive state and preserved from proteasomal degradation. Acts via its association with eef2/eEF2 factor at the A-site of the ribosome, promoting ribosome stabilization in an inactive state compatible with storage. Plays a key role in ribosome hibernation in the mature egg by promoting ribosome stabilization. Ribosomes, which are produced in large quantities during oogenesis, are stored and translationally repressed in the egg and early embryo. The chain is Intracellular hyaluronan-binding protein 4 from Danio rerio (Zebrafish).